A 148-amino-acid chain; its full sequence is 3-hydroxyacyl-[acyl-carrier-protein] dehydratase FabZ (148 aa).

His-55 is an active-site residue.

Belongs to the thioester dehydratase family. FabZ subfamily.

The protein localises to the cytoplasm. The enzyme catalyses a (3R)-hydroxyacyl-[ACP] = a (2E)-enoyl-[ACP] + H2O. Involved in unsaturated fatty acids biosynthesis. Catalyzes the dehydration of short chain beta-hydroxyacyl-ACPs and long chain saturated and unsaturated beta-hydroxyacyl-ACPs. This Haemophilus influenzae (strain ATCC 51907 / DSM 11121 / KW20 / Rd) protein is 3-hydroxyacyl-[acyl-carrier-protein] dehydratase FabZ.